The primary structure comprises 77 residues: Large ribosomal subunit protein uL24 (77 aa).

The segment at 42–61 (KKHQKPSQTNANGGVVESEG) is disordered.

This sequence belongs to the universal ribosomal protein uL24 family. As to quaternary structure, part of the 50S ribosomal subunit.

Functionally, one of two assembly initiator proteins, it binds directly to the 5'-end of the 23S rRNA, where it nucleates assembly of the 50S subunit. In terms of biological role, one of the proteins that surrounds the polypeptide exit tunnel on the outside of the subunit. The polypeptide is Large ribosomal subunit protein uL24 (Lactobacillus helveticus (strain DPC 4571)).